A 105-amino-acid polypeptide reads, in one-letter code: Ferredoxin (105 aa).

Positions 8 and 16 each coordinate [3Fe-4S] cluster. Positions 20, 39, 42, and 45 each coordinate [4Fe-4S] cluster. In terms of domain architecture, 4Fe-4S ferredoxin-type spans 30–59 (RSLYIHPDECVDCGACEPVCPVEAIFYEDD). Cysteine 49 serves as a coordination point for [3Fe-4S] cluster.

[4Fe-4S] cluster serves as cofactor. [3Fe-4S] cluster is required as a cofactor.

Functionally, ferredoxins are iron-sulfur proteins that transfer electrons in a wide variety of metabolic reactions. Putative electron transport protein for the cytochrome P-450SOY system from the same organism. The sequence is that of Ferredoxin from Streptomyces griseus.